The sequence spans 448 residues: Asparagine--tRNA ligase (448 aa).

It belongs to the class-II aminoacyl-tRNA synthetase family. As to quaternary structure, homodimer.

It localises to the cytoplasm. It catalyses the reaction tRNA(Asn) + L-asparagine + ATP = L-asparaginyl-tRNA(Asn) + AMP + diphosphate + H(+). This chain is Asparagine--tRNA ligase, found in Streptococcus pyogenes serotype M12 (strain MGAS9429).